Here is a 327-residue protein sequence, read N- to C-terminus: Gonadotropin-releasing hormone receptor (327 aa).

Residues 1 to 37 lie on the Extracellular side of the membrane; it reads MASASPEQNQNHCSAVNNSNMLMQGNLPTLTLSGKIR. N17 carries an N-linked (GlcNAc...) asparagine glycan. Residues 38-57 traverse the membrane as a helical segment; it reads VTVTFFLFLLSTIFNASFLL. The Cytoplasmic portion of the chain corresponds to 58–76; that stretch reads KLQKWTQKKEKGKKLSRMK. A helical transmembrane segment spans residues 77–96; that stretch reads VLLKHLTLANLLETLIVMPL. At 97–114 the chain is on the extracellular side; that stretch reads DGMWNITVQWYAGEFLCK. A glycan (N-linked (GlcNAc...) asparagine) is linked at N101. Cysteines 113 and 195 form a disulfide. A helical membrane pass occupies residues 115–136; sequence VLSYLKLFSMYAPAFMMVVISL. The Cytoplasmic segment spans residues 137-163; sequence DRSLAITRPLAMKNNGKLGQSMIGLAW. Residues 164 to 183 traverse the membrane as a helical segment; the sequence is LLSGIFAGPQLYIFRMIHLA. The Extracellular portion of the chain corresponds to 184 to 211; that stretch reads DSSGQTEGFPQCVTHCSFPQWWHQAFYN. A helical membrane pass occupies residues 212–231; sequence FFTFSCLFIIPLFITLICNA. Residues 232–280 are Cytoplasmic-facing; the sequence is KIIFTLTRVLHQDPHELQLNQSKNNIPRARLRTLKMTVAFATSFTVCWT. Residues 281 to 299 traverse the membrane as a helical segment; sequence PYYVLGIWYWFDPEMLNRV. The Extracellular portion of the chain corresponds to 300-305; it reads SDPVNH. A helical membrane pass occupies residues 306–325; that stretch reads FFFLFALLNPCFDPLIYGYF. The Cytoplasmic portion of the chain corresponds to 326 to 327; sequence SL.

This sequence belongs to the G-protein coupled receptor 1 family.

The protein localises to the cell membrane. Receptor for gonadotropin releasing hormone (GnRH) that mediates the action of GnRH to stimulate the secretion of the gonadotropic hormones luteinizing hormone (LH) and follicle-stimulating hormone (FSH). This receptor mediates its action by association with G-proteins that activate a phosphatidylinositol-calcium second messenger system. This chain is Gonadotropin-releasing hormone receptor (GNRHR), found in Canis lupus familiaris (Dog).